Consider the following 72-residue polypeptide: Translation initiation factor IF-1 (72 aa).

Positions 1-72 constitute an S1-like domain; it reads MSKDDVIEMQ…TRGRITWRAK (72 aa).

It belongs to the IF-1 family. In terms of assembly, component of the 30S ribosomal translation pre-initiation complex which assembles on the 30S ribosome in the order IF-2 and IF-3, IF-1 and N-formylmethionyl-tRNA(fMet); mRNA recruitment can occur at any time during PIC assembly.

It is found in the cytoplasm. In terms of biological role, one of the essential components for the initiation of protein synthesis. Stabilizes the binding of IF-2 and IF-3 on the 30S subunit to which N-formylmethionyl-tRNA(fMet) subsequently binds. Helps modulate mRNA selection, yielding the 30S pre-initiation complex (PIC). Upon addition of the 50S ribosomal subunit IF-1, IF-2 and IF-3 are released leaving the mature 70S translation initiation complex. This is Translation initiation factor IF-1 from Clostridium beijerinckii (strain ATCC 51743 / NCIMB 8052) (Clostridium acetobutylicum).